Here is a 127-residue protein sequence, read N- to C-terminus: Small ribosomal subunit protein uS12 (127 aa).

3-methylthioaspartic acid is present on Asp-89.

The protein belongs to the universal ribosomal protein uS12 family. As to quaternary structure, part of the 30S ribosomal subunit. Contacts proteins S8 and S17. May interact with IF1 in the 30S initiation complex.

Its function is as follows. With S4 and S5 plays an important role in translational accuracy. Interacts with and stabilizes bases of the 16S rRNA that are involved in tRNA selection in the A site and with the mRNA backbone. Located at the interface of the 30S and 50S subunits, it traverses the body of the 30S subunit contacting proteins on the other side and probably holding the rRNA structure together. The combined cluster of proteins S8, S12 and S17 appears to hold together the shoulder and platform of the 30S subunit. The polypeptide is Small ribosomal subunit protein uS12 (Campylobacter fetus subsp. fetus (strain 82-40)).